We begin with the raw amino-acid sequence, 687 residues long: MKKADASARARELRDRIRAADHAYYVLDQPLLADAEYDRLMHELQALEAEHPELVTADSPTQRVSGAPSERFERVVHREPMLSLGNVQSDDELHEFDARVRRLLGLPDGEPVGYVVEPKLDGLAVELVYRDGAFTSGSTRGDGVNGEDVTANLRVVGGLGANRGVPHALEGRPPPRVEVRGEVLLFKEHFEAMNRQLVRAGEEPFANPRNAAAGTLRQLDWRVTARRPLSFIAYEALLPGGDPWRTHWEKLEELAAWGFETNAENRRCRGLAEVLAYRDRMAERRFELPYDTDGIVVKVDDLDWRRRLGAASKFPRWAVAFKYPPQEEATRIRRIWASVGRTGVLTPVVDFDPVRLSGAMVARATLHNEDEMRRKDILEGDWVLVRRAGEVIPEVVKPLPERRTGAEQPFRFPAECPVCGARVVREEGEKVYRCTGAACPAQLVGRLCHFAQRRALDIEGLGEKLAAGLVERGQVKDFADLYAVPFEVWQQLFSRPRKEQDAGAARELPEKSAQNMVAALERSRKTTLRRFLFALGIPQVGEATAATLARHFGDLARVMDADEEALKGVRDVGPETAAEIRAWTQEPQNRRVVERLLAAGVTPEAEVVEARGPFAGKTVVLTGGLSTMSRDDAKAEIERRGGKVSGSVSRKTYLVVAGEDAGSKLEKARSLGVRIAGEEEFVRLLKE.

Residues 34 to 38, 83 to 84, and E117 each bind NAD(+); these read DAEYD and SL. K119 serves as the catalytic N6-AMP-lysine intermediate. Residues R140, E182, K298, and K322 each coordinate NAD(+). 4 residues coordinate Zn(2+): C416, C419, C434, and C439. Residues 609 to 687 enclose the BRCT domain; it reads EARGPFAGKT…EEEFVRLLKE (79 aa).

This sequence belongs to the NAD-dependent DNA ligase family. LigA subfamily. Mg(2+) is required as a cofactor. Requires Mn(2+) as cofactor.

The catalysed reaction is NAD(+) + (deoxyribonucleotide)n-3'-hydroxyl + 5'-phospho-(deoxyribonucleotide)m = (deoxyribonucleotide)n+m + AMP + beta-nicotinamide D-nucleotide.. Functionally, DNA ligase that catalyzes the formation of phosphodiester linkages between 5'-phosphoryl and 3'-hydroxyl groups in double-stranded DNA using NAD as a coenzyme and as the energy source for the reaction. It is essential for DNA replication and repair of damaged DNA. In Anaeromyxobacter dehalogenans (strain 2CP-1 / ATCC BAA-258), this protein is DNA ligase.